A 149-amino-acid polypeptide reads, in one-letter code: FAD synthase (149 aa).

Residues 9–10, 14–17, Asn-92, and Tyr-119 contribute to the ATP site; these read TF and HPGH.

The protein belongs to the archaeal FAD synthase family. In terms of assembly, homodimer. Requires a divalent metal cation as cofactor.

The enzyme catalyses FMN + ATP + H(+) = FAD + diphosphate. It functions in the pathway cofactor biosynthesis; FAD biosynthesis; FAD from FMN: step 1/1. In terms of biological role, catalyzes the transfer of the AMP portion of ATP to flavin mononucleotide (FMN) to produce flavin adenine dinucleotide (FAD) coenzyme. This is FAD synthase from Methanoculleus marisnigri (strain ATCC 35101 / DSM 1498 / JR1).